The chain runs to 143 residues: Transcriptional regulator MraZ (143 aa).

SpoVT-AbrB domains follow at residues glutamate 5–glutamate 47 and alanine 76–glutamine 119.

It belongs to the MraZ family. In terms of assembly, forms oligomers.

The protein localises to the cytoplasm. The protein resides in the nucleoid. The chain is Transcriptional regulator MraZ from Alkaliphilus metalliredigens (strain QYMF).